The primary structure comprises 692 residues: ATPase synthesis protein 25, mitochondrial (692 aa).

A mitochondrion-targeting transit peptide spans 1–73 (MNRILSKGPR…DGNGNTHRTT (73 aa)). Disordered stretches follow at residues 44–83 (PRLR…HTPW), 286–314 (RQVS…SSDH), and 338–373 (CRLL…HLAA). The segment covering 65 to 81 (GNGNTHRTTSTASSQHT) has biased composition (polar residues). A compositionally biased stretch (basic and acidic residues) spans 292 to 302 (TKSDAPHEEVR). The span at 347–357 (DNQDDGLDDGL) shows a compositional bias: acidic residues.

Belongs to the ATP25 family.

It localises to the mitochondrion inner membrane. Probable mitochondrial mRNA stabilization factor. In Neosartorya fischeri (strain ATCC 1020 / DSM 3700 / CBS 544.65 / FGSC A1164 / JCM 1740 / NRRL 181 / WB 181) (Aspergillus fischerianus), this protein is ATPase synthesis protein 25, mitochondrial (atp25).